Reading from the N-terminus, the 245-residue chain is Transmembrane and ubiquitin-like domain-containing protein 1 (245 aa).

The segment at 2–30 is required to release iHOPS from membranes; that stretch reads ALIEGVGDEVTVLFSVLACLLVLALAWVS. The chain crosses the membrane as a helical span at residues 11 to 31; the sequence is VTVLFSVLACLLVLALAWVST. Residues 34 to 51 are compositionally biased toward polar residues; the sequence is TESTDPLPQSSGTTTPAQ. The disordered stretch occupies residues 34 to 100; that stretch reads TESTDPLPQS…ASTPPDSPQE (67 aa). Phosphoserine is present on residues S73, S97, and S126. Positions 102 to 175 constitute a Ubiquitin-like domain; it reads LLLRLKFLND…LHCHVSTRVG (74 aa). 2 helical membrane-spanning segments follow: residues 194 to 214 and 219 to 239; these read IGSLLLPLLLLLLLLLWYCQI and FFPLTATLGLAGFTLLLSLLA.

As to quaternary structure, interacts with EEF1A1, GRIA2, GRIP1. Interacts with CAMLG, TUBG1. Interacts with NPM1 and CDKN2A; TMUB1 can enhance interaction between NPM1 and CDKN2A and is proposed to bridge the proteins; proposed to be mediated by iHOPS. Interacts with ERLIN2 and AMFR; TMUB1 promotes the interaction of ERLIN2 with AMFR. In terms of processing, processed by regulated intramembrane proteolysis (RIP) in the N-terminus to release iHOPS from membranes.

It localises to the membrane. Its subcellular location is the postsynaptic cell membrane. The protein resides in the recycling endosome. It is found in the cytoplasm. The protein localises to the cytoskeleton. It localises to the microtubule organizing center. Its subcellular location is the centrosome. The protein resides in the nucleus. It is found in the nucleolus. Functionally, involved in sterol-regulated ubiquitination and degradation of HMG-CoA reductase HMGCR. Involved in positive regulation of AMPA-selective glutamate receptor GRIA2 recycling to the cell surface. Acts as a negative regulator of hepatocyte growth during regeneration. In terms of biological role, may contribute to the regulation of translation during cell-cycle progression. May contribute to the regulation of cell proliferation. May be involved in centrosome assembly. Modulates stabilization and nucleolar localization of tumor suppressor CDKN2A and enhances association between CDKN2A and NPM1. In Rattus norvegicus (Rat), this protein is Transmembrane and ubiquitin-like domain-containing protein 1 (Tmub1).